The following is an 89-amino-acid chain: MAKKSMIAREVKRQALVERYAEQRAELKAQGDYIGLSKLPRNSSAVRLHNRCSITGRPHGYIGKFGISRIKFRDLAHKGQIPGVKKASW.

This sequence belongs to the universal ribosomal protein uS14 family. As to quaternary structure, part of the 30S ribosomal subunit. Contacts proteins S3 and S10.

In terms of biological role, binds 16S rRNA, required for the assembly of 30S particles and may also be responsible for determining the conformation of the 16S rRNA at the A site. This is Small ribosomal subunit protein uS14 from Exiguobacterium sibiricum (strain DSM 17290 / CCUG 55495 / CIP 109462 / JCM 13490 / 255-15).